The chain runs to 547 residues: Chaperonin GroEL (547 aa).

ATP-binding positions include 30–33, Lys-51, 87–91, Gly-415, 479–481, and Asp-495; these read TLGP, DGTTT, and NAA.

This sequence belongs to the chaperonin (HSP60) family. Forms a cylinder of 14 subunits composed of two heptameric rings stacked back-to-back. Interacts with the co-chaperonin GroES.

It is found in the cytoplasm. It catalyses the reaction ATP + H2O + a folded polypeptide = ADP + phosphate + an unfolded polypeptide.. In terms of biological role, together with its co-chaperonin GroES, plays an essential role in assisting protein folding. The GroEL-GroES system forms a nano-cage that allows encapsulation of the non-native substrate proteins and provides a physical environment optimized to promote and accelerate protein folding. The sequence is that of Chaperonin GroEL from Pseudomonas fluorescens (strain ATCC BAA-477 / NRRL B-23932 / Pf-5).